The chain runs to 189 residues: GTP cyclohydrolase 1 (189 aa).

Zn(2+)-binding residues include C80, H83, and C152.

The protein belongs to the GTP cyclohydrolase I family. Toroid-shaped homodecamer, composed of two pentamers of five dimers.

The enzyme catalyses GTP + H2O = 7,8-dihydroneopterin 3'-triphosphate + formate + H(+). It functions in the pathway cofactor biosynthesis; 7,8-dihydroneopterin triphosphate biosynthesis; 7,8-dihydroneopterin triphosphate from GTP: step 1/1. The chain is GTP cyclohydrolase 1 from Latilactobacillus sakei subsp. sakei (strain 23K) (Lactobacillus sakei subsp. sakei).